Consider the following 331-residue polypeptide: 6-phosphogluconolactonase (331 aa).

Belongs to the cycloisomerase 2 family.

It carries out the reaction 6-phospho-D-glucono-1,5-lactone + H2O = 6-phospho-D-gluconate + H(+). It functions in the pathway carbohydrate degradation; pentose phosphate pathway; D-ribulose 5-phosphate from D-glucose 6-phosphate (oxidative stage): step 2/3. Its function is as follows. Catalyzes the hydrolysis of 6-phosphogluconolactone to 6-phosphogluconate. This chain is 6-phosphogluconolactonase, found in Salmonella agona (strain SL483).